A 66-amino-acid polypeptide reads, in one-letter code: Large ribosomal subunit protein uL29 (66 aa).

This sequence belongs to the universal ribosomal protein uL29 family.

This is Large ribosomal subunit protein uL29 from Chelativorans sp. (strain BNC1).